Reading from the N-terminus, the 130-residue chain is Profilin-1 (130 aa).

Belongs to the profilin family. As to quaternary structure, interacts with actin. Interacts with RHO1 (GTP-bound form).

Its subcellular location is the cytoplasm. It localises to the cytoskeleton. The protein localises to the cell projection. It is found in the phagocytic cup. The protein resides in the cytoplasmic vesicle. Its subcellular location is the phagosome. Binds to actin and affects the structure of the cytoskeleton. At high concentrations, profilin prevents the polymerization of actin, whereas it enhances it at low concentrations. By binding to PIP2, it inhibits the formation of IP3 and DG. This is Profilin-1 from Entamoeba histolytica (strain ATCC 30459 / HM-1:IMSS / ABRM).